We begin with the raw amino-acid sequence, 231 residues long: 7-cyano-7-deazaguanine synthase (231 aa).

8–18 contributes to the ATP binding site; the sequence is FSGGQDSTTCL. Cys188, Cys197, Cys200, and Cys203 together coordinate Zn(2+).

The protein belongs to the QueC family. The cofactor is Zn(2+).

It catalyses the reaction 7-carboxy-7-deazaguanine + NH4(+) + ATP = 7-cyano-7-deazaguanine + ADP + phosphate + H2O + H(+). The protein operates within purine metabolism; 7-cyano-7-deazaguanine biosynthesis. Functionally, catalyzes the ATP-dependent conversion of 7-carboxy-7-deazaguanine (CDG) to 7-cyano-7-deazaguanine (preQ(0)). The chain is 7-cyano-7-deazaguanine synthase from Pectobacterium carotovorum subsp. carotovorum (strain PC1).